The primary structure comprises 511 residues: TNF receptor-associated factor family protein DDB_G0290931 (511 aa).

Residues C27–R67 form an RING-type; degenerate zinc finger. Positions I103–G169 form a coiled coil. Residues N107 to K159 are disordered. A compositionally biased stretch (acidic residues) spans E109 to E155. 2 TRAF-type zinc fingers span residues R181 to L234 and N236 to Q293. A coiled-coil region spans residues E324–Y358. In terms of domain architecture, MATH spans G374–V499.

The protein belongs to the TNF receptor-associated factor family. A subfamily.

The protein resides in the cytoplasm. Probable adapter protein and signal transducer that links members of the tumor necrosis factor receptor family to different signaling pathways by association with the receptor cytoplasmic domain and kinases. The polypeptide is TNF receptor-associated factor family protein DDB_G0290931 (Dictyostelium discoideum (Social amoeba)).